The primary structure comprises 266 residues: MAAGEISTPQEYISHHLHHLQVGTGFWSINVDSMFFSIALGILFLVIFHRVAKRATSGVPGKLQTAVELLIGFVDGTVRDMFHGKSKLIAPLALTIFVWVFLMNMMDLLPIDLLPQLWAGVYSLLGYDPAHAYLRAVPTADVNITLSMALGVFILVLFYSIKMKGLGGFVKELTMQPFNHPVFIPINLILEGVSLLSKPISLGLRLFGNMYAGELIFILIAGLLPWWSQWLLNVPWAIFHILIITLQAFIFMVLTVVYLSMASEEH.

The next 5 helical transmembrane spans lie at 28–48 (SINVDSMFFSIALGILFLVIF), 88–108 (LIAPLALTIFVWVFLMNMMDL), 141–161 (DVNITLSMALGVFILVLFYSI), 206–226 (LFGNMYAGELIFILIAGLLPW), and 237–257 (AIFHILIITLQAFIFMVLTVV).

The protein belongs to the ATPase A chain family. In terms of assembly, F-type ATPases have 2 components, CF(1) - the catalytic core - and CF(0) - the membrane proton channel. CF(1) has five subunits: alpha(3), beta(3), gamma(1), delta(1), epsilon(1). CF(0) has three main subunits: a(1), b(2) and c(9-12). The alpha and beta chains form an alternating ring which encloses part of the gamma chain. CF(1) is attached to CF(0) by a central stalk formed by the gamma and epsilon chains, while a peripheral stalk is formed by the delta and b chains.

The protein resides in the cell inner membrane. Functionally, key component of the proton channel; it plays a direct role in the translocation of protons across the membrane. In Pectobacterium atrosepticum (strain SCRI 1043 / ATCC BAA-672) (Erwinia carotovora subsp. atroseptica), this protein is ATP synthase subunit a.